The sequence spans 65 residues: Large ribosomal subunit protein bL35 (65 aa).

The segment covering 1 to 16 (MPKMKTKSSAKKRFKV) has biased composition (basic residues). The segment at 1-26 (MPKMKTKSSAKKRFKVRSSGGIKRSQ) is disordered.

Belongs to the bacterial ribosomal protein bL35 family.

This is Large ribosomal subunit protein bL35 from Azoarcus sp. (strain BH72).